The chain runs to 95 residues: Mitochondrial import inner membrane translocase subunit Tim13 (95 aa).

Methionine 1 carries the N-acetylmethionine modification. Serine 7 bears the Phosphoserine mark. The Twin CX3C motif signature appears at 46-69 (CFRKCIGKPGGSLDNSEQKCIAMC). 2 disulfides stabilise this stretch: cysteine 46/cysteine 69 and cysteine 50/cysteine 65. At lysine 53 the chain carries N6-succinyllysine.

Belongs to the small Tim family. In terms of assembly, heterohexamer; composed of 3 copies of TIMM8 (TIMM8A or TIMM8B) and 3 copies of TIMM13, named soluble 70 kDa complex. Associates with the TIM22 complex, whose core is composed of TIMM22. Ubiquitous, with highest expression in heart, kidney, liver and skeletal muscle.

The protein localises to the mitochondrion inner membrane. Functionally, mitochondrial intermembrane chaperone that participates in the import and insertion of some multi-pass transmembrane proteins into the mitochondrial inner membrane. Also required for the transfer of beta-barrel precursors from the TOM complex to the sorting and assembly machinery (SAM complex) of the outer membrane. Acts as a chaperone-like protein that protects the hydrophobic precursors from aggregation and guide them through the mitochondrial intermembrane space. The TIMM8-TIMM13 complex mediates the import of proteins such as TIMM23, SLC25A12/ARALAR1 and SLC25A13/ARALAR2, while the predominant TIMM9-TIMM10 70 kDa complex mediates the import of much more proteins. This chain is Mitochondrial import inner membrane translocase subunit Tim13 (TIMM13), found in Homo sapiens (Human).